The primary structure comprises 246 residues: Sensory transduction protein LytT (246 aa).

One can recognise a Response regulatory domain in the interval Lys-3–Lys-117. In terms of domain architecture, HTH LytTR-type spans Leu-142–Ile-246.

Post-translationally, phosphorylated by LytS.

It localises to the cytoplasm. Its function is as follows. Member of the two-component regulatory system LytS/LytT that probably regulates genes involved in cell wall metabolism. This chain is Sensory transduction protein LytT (lytT), found in Bacillus cereus (strain ATCC 14579 / DSM 31 / CCUG 7414 / JCM 2152 / NBRC 15305 / NCIMB 9373 / NCTC 2599 / NRRL B-3711).